The following is a 519-amino-acid chain: Carboxyl-terminal-processing peptidase 3, chloroplastic (519 aa).

In terms of domain architecture, PDZ spans tyrosine 186–glycine 274. Active-site charge relay system residues include serine 407 and lysine 432.

Belongs to the peptidase S41A family.

The protein localises to the plastid. The protein resides in the chloroplast thylakoid lumen. It catalyses the reaction The enzyme shows specific recognition of a C-terminal tripeptide, Xaa-Yaa-Zaa, in which Xaa is preferably Ala or Leu, Yaa is preferably Ala or Tyr, and Zaa is preferably Ala, but then cleaves at a variable distance from the C-terminus. A typical cleavage is -Ala-Ala-|-Arg-Ala-Ala-Lys-Glu-Asn-Tyr-Ala-Leu-Ala-Ala.. In terms of biological role, protease involved in the C-terminal processing of the chloroplastic D1 protein of photosystem II. This proteolytic processing is necessary to allow the light-driven assembly of the tetranuclear manganese cluster, which is responsible for photosynthetic water oxidation. This Arabidopsis thaliana (Mouse-ear cress) protein is Carboxyl-terminal-processing peptidase 3, chloroplastic (CTPA3).